Here is a 148-residue protein sequence, read N- to C-terminus: Snaclec 7 (148 aa).

Residues 1-23 (MGRFIFVSFGLLVVFLSLSGTGA) form the signal peptide. Disulfide bonds link C27–C38, C55–C144, and C121–C136. The region spanning 34-145 (HERHCYKVIN…CSSTHPFVCK (112 aa)) is the C-type lectin domain.

It belongs to the snaclec family. As to quaternary structure, heterodimer; disulfide-linked. As to expression, expressed by the venom gland.

The protein localises to the secreted. In terms of biological role, interferes with one step of hemostasis (modulation of platelet aggregation, or coagulation cascade, for example). The polypeptide is Snaclec 7 (Echis pyramidum leakeyi (Leakey's carpet viper)).